Reading from the N-terminus, the 315-residue chain is Ribosomal RNA small subunit methyltransferase H (315 aa).

S-adenosyl-L-methionine contacts are provided by residues 37–39 (GGH), aspartate 57, phenylalanine 83, aspartate 105, and glutamine 112.

The protein belongs to the methyltransferase superfamily. RsmH family.

The protein localises to the cytoplasm. It carries out the reaction cytidine(1402) in 16S rRNA + S-adenosyl-L-methionine = N(4)-methylcytidine(1402) in 16S rRNA + S-adenosyl-L-homocysteine + H(+). Functionally, specifically methylates the N4 position of cytidine in position 1402 (C1402) of 16S rRNA. The sequence is that of Ribosomal RNA small subunit methyltransferase H from Pseudomonas entomophila (strain L48).